Consider the following 229-residue polypeptide: Guanylate kinase (229 aa).

An RPE1 insert domain is found at 7–42 (RVLQKCAYREEFKGDMERSTAATSKLPLEVELSRNS). The region spanning 44–222 (GLIIILSSPS…TLKKIHAIIV (179 aa)) is the Guanylate kinase-like domain. 51–58 (SPSGTGKS) is an ATP binding site.

Belongs to the guanylate kinase family.

Its subcellular location is the cytoplasm. The catalysed reaction is GMP + ATP = GDP + ADP. Its function is as follows. Essential for recycling GMP and indirectly, cGMP. The sequence is that of Guanylate kinase (gmk) from Rickettsia conorii (strain ATCC VR-613 / Malish 7).